A 222-amino-acid polypeptide reads, in one-letter code: FCS-Like Zinc finger 13 (222 aa).

An FLZ-type zinc finger spans residues 149–192; the sequence is EFLSSCCLCKKKLQGKDIYMYKGEMGFCSAECRSVQIMNDERQE.

It belongs to the FLZ family. In terms of assembly, interacts with KIN10 and KIN11 via its FLZ-type zinc finger domain. Interacts with KINB1, KINB2, KINB3 and SNF4 via its N-terminal part.

Its subcellular location is the nucleus. The protein localises to the cytoplasm. May act as an adapter to facilitate the interaction of SnRK1 complex with effector proteins, conferring tissue- and stimulus-type specific differences in the SnRK1 regulation pathway. This chain is FCS-Like Zinc finger 13, found in Arabidopsis thaliana (Mouse-ear cress).